We begin with the raw amino-acid sequence, 704 residues long: Elongation factor G 1 (704 aa).

One can recognise a tr-type G domain in the interval 8–290 (ERYRNIGICA…CVVEYMPAPT (283 aa)). GTP-binding positions include 17 to 24 (AHVDAGKT), 88 to 92 (DTPGH), and 142 to 145 (NKMD).

This sequence belongs to the TRAFAC class translation factor GTPase superfamily. Classic translation factor GTPase family. EF-G/EF-2 subfamily.

The protein resides in the cytoplasm. Its function is as follows. Catalyzes the GTP-dependent ribosomal translocation step during translation elongation. During this step, the ribosome changes from the pre-translocational (PRE) to the post-translocational (POST) state as the newly formed A-site-bound peptidyl-tRNA and P-site-bound deacylated tRNA move to the P and E sites, respectively. Catalyzes the coordinated movement of the two tRNA molecules, the mRNA and conformational changes in the ribosome. The sequence is that of Elongation factor G 1 from Pseudoalteromonas translucida (strain TAC 125).